The primary structure comprises 448 residues: UDP-N-acetylmuramoylalanine--D-glutamate ligase (448 aa).

Position 112 to 118 (112 to 118 (GSNAKST)) interacts with ATP.

It belongs to the MurCDEF family.

Its subcellular location is the cytoplasm. The catalysed reaction is UDP-N-acetyl-alpha-D-muramoyl-L-alanine + D-glutamate + ATP = UDP-N-acetyl-alpha-D-muramoyl-L-alanyl-D-glutamate + ADP + phosphate + H(+). It functions in the pathway cell wall biogenesis; peptidoglycan biosynthesis. Functionally, cell wall formation. Catalyzes the addition of glutamate to the nucleotide precursor UDP-N-acetylmuramoyl-L-alanine (UMA). This chain is UDP-N-acetylmuramoylalanine--D-glutamate ligase, found in Acinetobacter baylyi (strain ATCC 33305 / BD413 / ADP1).